The chain runs to 97 residues: NELL2-interacting cell ontogeny regulator 1 (97 aa).

Residues 1–35 (MAPLPPCGPPRSPPPRLLLLLLLLSATLLGAPARA) form the signal peptide.

This sequence belongs to the NICOL family. Interacts with NELL2; triggers epididymal differentiation. Interacts with cell surface receptor TFRC; the interaction mediates uptake of NICOL1 into fibroblasts.

The protein localises to the secreted. It is found in the cytoplasm. The protein resides in the perinuclear region. In terms of biological role, mRNA-binding protein which interacts with a range of target mRNAs including SERPINE1, ACTA2, CCN2 and COL4A1 and may promote extracellular matrix production. Binds to the 3'-UTR of SERPINE1 mRNA and stabilizes the mRNA, possibly by competing for binding with SERBP1 and preventing SERBP1-mediated mRNA degradation. Also binds to the 3'-UTR of ACTA2. Testis-derived lumicrine factor that triggers epididymal differentiation and sperm maturation. The polypeptide is NELL2-interacting cell ontogeny regulator 1 (Bos taurus (Bovine)).